We begin with the raw amino-acid sequence, 635 residues long: Early transcription factor 70 kDa subunit (635 aa).

Positions 32–185 (RSILDENNSV…SNIISIMSDE (154 aa)) constitute a Helicase ATP-binding domain. 45–52 (HIMGSGKT) contributes to the ATP binding site. Positions 135 to 138 (DEAH) match the DEXH box motif.

Belongs to the helicase family. VETF subfamily. Heterodimer of a 70 kDa and a 82 kDa subunit. Part of the early transcription complex composed of ETF, RAP94, and the DNA-directed RNA polymerase.

The protein localises to the virion. Acts with RNA polymerase to initiate transcription from early gene promoters. Is recruited by the RPO-associated protein of 94 kDa (RAP94) to form the early transcription complex, which also contains the core RNA polymerase. ETF heterodimer binds to early gene promoters. This is Early transcription factor 70 kDa subunit (VETFS) from Homo sapiens (Human).